Consider the following 1273-residue polypeptide: Chitin synthase 7 (1273 aa).

A disordered region spans residues 1-69; sequence MPAVERNAPF…LINPSSGGPG (69 aa). At 1 to 79 the chain is on the cytoplasmic side; it reads MPAVERNAPF…FSAASRSKHR (79 aa). The helical transmembrane segment at 80–100 threads the bilayer; it reads FSWWTAFSLFVTFWAPSPLLS. The Extracellular portion of the chain corresponds to 101–117; the sequence is SCCGLKDKQSRQAWREK. A helical transmembrane segment spans residues 118-138; the sequence is VSLVFIAILLGGFIGFITMGL. Topologically, residues 139–360 are cytoplasmic; sequence NAALCPSASS…FISNLVLYCS (222 aa). A helical transmembrane segment spans residues 361 to 381; it reads LVVILAIVLIRFFMAVWFAWF. At 382–820 the chain is on the extracellular side; the sequence is MAGRMSSPPR…LCGTFCFSMQ (439 aa). Asparagine 412 is a glycosylation site (N-linked (GlcNAc...) asparagine). A disordered region spans residues 416–451; the sequence is AAPWANKQRPPPSQPARRRRDSAQSATPSVPDSLSV. 2 N-linked (GlcNAc...) asparagine glycosylation sites follow: asparagine 667 and asparagine 796. A helical transmembrane segment spans residues 821 to 841; sequence FVVFMDLLGTAVLPISIALTY. At 842 to 857 the chain is on the cytoplasmic side; it reads TLVVTYCLNPPHSFTE. A helical membrane pass occupies residues 858–878; that stretch reads AIPLMLLVAVIGMPALLILLA. The Extracellular portion of the chain corresponds to 879–881; sequence TRK. The helical transmembrane segment at 882-902 threads the bilayer; that stretch reads VVYVLWMLIYLLALPVWNFVL. Residues 903–1273 lie on the Cytoplasmic side of the membrane; it reads PVYSFWHFDD…RGRSYHDRFS (371 aa). 2 disordered regions span residues 966-1009 and 1126-1273; these read RELE…SVTV and NGGG…DRFS. The segment covering 1000 to 1009 has biased composition (low complexity); that stretch reads SDSFSDSVTV. Over residues 1215–1232 the composition is skewed to pro residues; the sequence is QHPPQPSQPPQPPQPAQP. Positions 1233–1246 are enriched in low complexity; the sequence is TRPGGAPAAPPRGA.

It belongs to the chitin synthase family. Class IV subfamily.

Its subcellular location is the cell membrane. It is found in the cytoplasmic vesicle membrane. The catalysed reaction is [(1-&gt;4)-N-acetyl-beta-D-glucosaminyl](n) + UDP-N-acetyl-alpha-D-glucosamine = [(1-&gt;4)-N-acetyl-beta-D-glucosaminyl](n+1) + UDP + H(+). Its function is as follows. Polymerizes chitin, a structural polymer of the cell wall and septum, by transferring the sugar moiety of UDP-GlcNAc to the non-reducing end of the growing chitin polymer. This chain is Chitin synthase 7, found in Mycosarcoma maydis (Corn smut fungus).